Reading from the N-terminus, the 83-residue chain is U5-theraphotoxin-Hs1c (83 aa).

The signal sequence occupies residues 1–21; that stretch reads MKTSMFLTLTGLVLLFVVCYA. A propeptide spanning residues 22-49 is cleaved from the precursor; it reads SESEEKEFPKELLSSIFAADSDFKVEER. Intrachain disulfides connect C51–C63, C56–C68, and C62–C75.

Belongs to the neurotoxin 10 (Hwtx-1) family. 51 (Hntx-8) subfamily. Hntx-8 sub-subfamily. In terms of tissue distribution, expressed by the venom gland.

The protein resides in the secreted. Its function is as follows. Agglutinates erythrocytes. The chain is U5-theraphotoxin-Hs1c from Cyriopagopus schmidti (Chinese bird spider).